Reading from the N-terminus, the 1858-residue chain is MSIVIPLGVDTAETSYLEMAAGSEPESVEASPVVVEKSNSYPHQLYTSSSHHSHSYIGLPYADHNYGARPPPTPPASPPPSVLISKNEVGIFTTPNFDETSSATTISTSEDGSYGTDVTRCICGFTHDDGYMICCDKCSVWQHIDCMGIDRQHIPDTYLCERCQPRNLDKERAVLLQRRKRENMSDGDTSATESGDEVPVELYTAFQHTPTSITLTASRVSKVNDKRRKKSGEKEQHISKCKKAFREGSRKSSRVKGSAPEIDPSSDGSNFGWETKIKAWMDRYEEANNNQYSEGVQREAQRIALRLGNGNDKKEMNKSDLNTNNLLFKPPVESHIQKNKKILKSAKDLPPDALIIEYRGKFMLREQFEANGYFFKRPYPFVLFYSKFHGLEMCVDARTFGNEARFIRRSCTPNAEVRHEIQDGTIHLYIYSIHSIPKGTEITIAFDFDYGNCKYKVDCACLKENPECPVLKRSSESMENINSGYETRRKKGKKDKDISKEKDTQNQNITLDCEGTTNKMKSPETKQRKLSPLRLSVSNNQEPDFIDDIEEKTPISNEVEMESEEQIAERKRKMTREERKMEAILQAFARLEKREKRREQALERISTAKTEVKTECKDTQIVSDAEVIQEQAKEENASKPTPAKVNRTKQRKSFSRSRTHIGQQRRRHRTVSMCSDIQPSSPDIEVTSQQNDIENTVLTIEPETETALAEIITETEVPALNKCPTKYPKTKKHLVNEWLSEKNEKTGKPSDGLSERPLRITTDPEVLATQLNSLPGLTYSPHVYSTPKHYIRFTSPFLSEKRRRKEPTENISGSCKKRWLKQALEEENSAILHRFNSPCQERSRSPAVNGENKSPLLLNDSCSLPDLTTPLKKRRFYQLLDSVYSETSTPTPSPYATPTHTDITPMDPSFATPPRIKSDDETCRNGYKPIYSPVTPVTPGTPGNTMHFENISSPESSPEIKRRTYSQEGYDRSSTMLTLGPFRNSNLTELGLQEIKTIGYTSPRSRTEVNRQCPGEKEPVSDLQLGLDAVEPTALHKTLETPAHDRAEPNSQLDSTHSGRGTMYSSWVKSPDRTGVNFSVNSNLRDLTPSHQLEVGGGFRISESKCLMQDDTRGMFMETTVFCTSEDGLVSGFGRTVNDNLIDGNCTPQNPPQKKKVSLLEYRKRQREARKSGSKTENFPLISVSPHASGSLSNNGDGCASSNDNGEQVDHTASLPLPTPATVYNATSEETSNNCPVKDATASEKNEPEVQWTASTSVEQVRERSYQRALLLSDHRKDKDSGGESPCVSCSPSHVQSSPSSHSNHIPQLQAKGPVPSFSELMEDPDPENPEPTTTNECPSPDTSQNTCKSPPKMSKPGSPGSVIPAQAHGKIFTKPDPQWDSTVSASEAENGVHLKTELQQKQLSNNNQALSKNHPPQTHVRNSSEQLSQKLPSVPTKLHCPPSPHLENPPKSSTPHTPVQHGYLSPKPPSQQLGSPYRPHHSQSPQVGTPQREPQRNFYPAAQNLPANTQQATSGTLFTQTPSGQSSATYSQFNQQSLNSTAPPPPPPPPPSSSYYQNQQPSANFQNYNQLKGSLSQQTVFTSGPNQALPGTTSQQTVPGHHVTPGHFLPSQNPTIHHQTAAAVVPPPPPPPPAPGPHLVQQPNSHQQHSVAHVVGPVHAVTPGSHIHSQTAGHHLPPPPPPPGPAPHHHPPPHPSTGLQGLQAQHQHVVNSAPPPPPPPPPSSVLASGHHTTSAQALHHPPHQGPPLFPSSAHPTVPPYPSQATHHTTLGPGPQHQPSGTGPHCPLPVTGPHLQPQGPNSIPTPTASGFCPHPGSVALPHGVQGPQQASPVPGQIPIHRAQVPPTFQNNYHGSGWH.

Residues 63 to 66 (DHNY) carry the HCFC1-binding motif (HBM) motif. The PHD-type zinc-finger motif lies at 118-166 (VTRCICGFTHDDGYMICCDKCSVWQHIDCMGIDRQHIPDTYLCERCQPR). The Zn(2+) site is built by Cys-121, Cys-123, Cys-135, Cys-138, His-143, Cys-146, Cys-160, and Cys-163. The interval 217–269 (ASRVSKVNDKRRKKSGEKEQHISKCKKAFREGSRKSSRVKGSAPEIDPSSDGS) is disordered. Over residues 232-250 (GEKEQHISKCKKAFREGSR) the composition is skewed to basic and acidic residues. Positions 330–447 (PPVESHIQKN…KGTEITIAFD (118 aa)) constitute an SET domain. An O-linked (GlcNAc) serine glycan is attached at Ser-435. A glycan (O-linked (GlcNAc) threonine) is linked at Thr-440. A disordered region spans residues 475-530 (SESMENINSGYETRRKKGKKDKDISKEKDTQNQNITLDCEGTTNKMKSPETKQRKL). Over residues 494-504 (KDKDISKEKDT) the composition is skewed to basic and acidic residues. A compositionally biased stretch (polar residues) spans 505-520 (QNQNITLDCEGTTNKM). A coiled-coil region spans residues 559 to 615 (VEMESEEQIAERKRKMTREERKMEAILQAFARLEKREKRREQALERISTAKTEVKTE). Phosphoserine is present on Ser-623. Residues 630-687 (EQAKEENASKPTPAKVNRTKQRKSFSRSRTHIGQQRRRHRTVSMCSDIQPSSPDIEVT) are disordered. The segment covering 646-670 (NRTKQRKSFSRSRTHIGQQRRRHRT) has biased composition (basic residues). Residues 672–687 (SMCSDIQPSSPDIEVT) show a composition bias toward polar residues. A phosphoserine mark is found at Ser-837 and Ser-845. Low complexity-rich tracts occupy residues 887–901 (TSTP…PTHT) and 933–957 (PVTP…PESS). 2 disordered regions span residues 887 to 960 (TSTP…SPEI) and 1039 to 1068 (LETP…SSWV). Residues 1039–1048 (LETPAHDRAE) are compositionally biased toward basic and acidic residues. Residues 1049–1068 (PNSQLDSTHSGRGTMYSSWV) show a composition bias toward polar residues. A Phosphoserine modification is found at Ser-1070. Disordered regions lie at residues 1164–1561 (KRQR…QNQQ) and 1581–1835 (VFTS…PVPG). Composition is skewed to polar residues over residues 1186-1206 (PHAS…NDNG) and 1222-1235 (TVYN…SNNC). Ser-1273 carries the post-translational modification Phosphoserine. Residues 1273–1282 (SDHRKDKDSG) are compositionally biased toward basic and acidic residues. Composition is skewed to low complexity over residues 1285 to 1303 (SPCV…SSHS) and 1349 to 1362 (KSPP…SPGS). Phosphoserine is present on Ser-1359. Composition is skewed to polar residues over residues 1400 to 1432 (QQKQ…SQKL) and 1506 to 1542 (LPAN…LNST). A compositionally biased stretch (pro residues) spans 1543 to 1553 (APPPPPPPPPS). A compositionally biased stretch (polar residues) spans 1581–1599 (VFTSGPNQALPGTTSQQTV). A compositionally biased stretch (pro residues) spans 1626-1637 (VPPPPPPPPAPG). Residues 1642-1651 (QQPNSHQQHS) show a composition bias toward polar residues. The segment covering 1677 to 1687 (LPPPPPPPGPA) has biased composition (pro residues). Residues 1698 to 1711 (TGLQGLQAQHQHVV) show a composition bias toward polar residues. A compositionally biased stretch (pro residues) spans 1714-1724 (APPPPPPPPPS). The span at 1798–1808 (QGPNSIPTPTA) shows a compositional bias: polar residues.

This sequence belongs to the class V-like SAM-binding methyltransferase superfamily. Histone-lysine methyltransferase family. TRX/MLL subfamily. Component of a complex composed of KMT2E (isoform 3), OGT and USP7; the complex stabilizes KMT2E, preventing KMT2E ubiquitination and proteasomal-mediated degradation. Isoform 3 interacts (via N-terminus) with OGT (via TRP repeats). Isoform 3 interacts with deubiquitinating enzyme USP7 (via MATH domain). Isoform 3 interacts (via HBM motif) with HCFC1 (via Kelch domain). Isoform 3 interacts with E2F1; the interaction is probably indirect and is mediated via HCFC1. Post-translationally, ubiquitinated. Deubiquitinated by USP7. O-glycosylated at Ser-435 and Thr-440 in the SET domain by OGT which probably prevents KMT2E proteasomal-mediated degradation. Widely expressed in both adult and fetal tissues. Highest levels of expression observed in fetal thymus and kidney and in adult hematopoietic tissues, jejunum and cerebellum. Isoform NKp44L: Not detected on circulating cells from healthy individuals, but is expressed on a large panel of tumor and transformed cells.

It is found in the chromosome. It localises to the cytoplasm. The protein resides in the cytoskeleton. Its subcellular location is the microtubule organizing center. The protein localises to the centrosome. It is found in the nucleus speckle. It localises to the nucleus. The protein resides in the nucleoplasm. Its subcellular location is the cell membrane. Its function is as follows. Associates with chromatin regions downstream of transcriptional start sites of active genes and thus regulates gene transcription. Chromatin interaction is mediated via the binding to tri-methylated histone H3 at 'Lys-4' (H3K4me3). Key regulator of hematopoiesis involved in terminal myeloid differentiation and in the regulation of hematopoietic stem cell (HSCs) self-renewal by a mechanism that involves DNA methylation. Also acts as an important cell cycle regulator, participating in cell cycle regulatory network machinery at multiple cell cycle stages including G1/S transition, S phase progression and mitotic entry. Recruited to E2F1 responsive promoters by HCFC1 where it stimulates tri-methylation of histone H3 at 'Lys-4' and transcriptional activation and thereby facilitates G1 to S phase transition. During myoblast differentiation, required to suppress inappropriate expression of S-phase-promoting genes and maintain expression of determination genes in quiescent cells. Functionally, cellular ligand for NCR2/NKp44, may play a role as a danger signal in cytotoxicity and NK-cell-mediated innate immunity. The chain is Inactive histone-lysine N-methyltransferase 2E (KMT2E) from Homo sapiens (Human).